Consider the following 274-residue polypeptide: Serine acetyltransferase (274 aa).

It belongs to the transferase hexapeptide repeat family.

It is found in the cytoplasm. It carries out the reaction L-serine + acetyl-CoA = O-acetyl-L-serine + CoA. It functions in the pathway amino-acid biosynthesis; L-cysteine biosynthesis; L-cysteine from L-serine: step 1/2. The polypeptide is Serine acetyltransferase (cysE) (Buchnera aphidicola subsp. Acyrthosiphon pisum (strain APS) (Acyrthosiphon pisum symbiotic bacterium)).